Reading from the N-terminus, the 153-residue chain is SsrA-binding protein (153 aa).

Belongs to the SmpB family.

It localises to the cytoplasm. Functionally, required for rescue of stalled ribosomes mediated by trans-translation. Binds to transfer-messenger RNA (tmRNA), required for stable association of tmRNA with ribosomes. tmRNA and SmpB together mimic tRNA shape, replacing the anticodon stem-loop with SmpB. tmRNA is encoded by the ssrA gene; the 2 termini fold to resemble tRNA(Ala) and it encodes a 'tag peptide', a short internal open reading frame. During trans-translation Ala-aminoacylated tmRNA acts like a tRNA, entering the A-site of stalled ribosomes, displacing the stalled mRNA. The ribosome then switches to translate the ORF on the tmRNA; the nascent peptide is terminated with the 'tag peptide' encoded by the tmRNA and targeted for degradation. The ribosome is freed to recommence translation, which seems to be the essential function of trans-translation. The polypeptide is SsrA-binding protein (Cytophaga hutchinsonii (strain ATCC 33406 / DSM 1761 / CIP 103989 / NBRC 15051 / NCIMB 9469 / D465)).